Reading from the N-terminus, the 93-residue chain is Progonadoliberin-2 (93 aa).

The signal sequence occupies residues 1–24; that stretch reads MACQRHLLFLLLVLFAVSTQLSHG. Pyrrolidone carboxylic acid is present on Gln-25. At Gly-34 the chain carries Glycine amide.

It belongs to the GnRH family. In terms of tissue distribution, midbrain and hindbrain.

It is found in the secreted. Its function is as follows. Stimulates the secretion of gonadotropins. The polypeptide is Progonadoliberin-2 (gnrh2) (Aquarana catesbeiana (American bullfrog)).